A 364-amino-acid chain; its full sequence is Trans-enoyl reductase traG (364 aa).

51 to 54 (VDAK) is a binding site for NADP(+). 136-143 (LGLFTAGL) contributes to the substrate binding site. NADP(+) is bound by residues 176–179 (STAT), 199–202 (SKAN), Tyr217, and 264–265 (LE). 286–290 (ALTVF) contributes to the substrate binding site. Residue 355–356 (MS) coordinates NADP(+).

It belongs to the zinc-containing alcohol dehydrogenase family. In terms of assembly, monomer.

Its pathway is secondary metabolite biosynthesis. Its function is as follows. Trans-enoyl reductase; part of the tra gene cluster that produces terrestric acid. The clavatol biosynthesis cluster cla and the terrestric acid cluster tra are both involved in the production of peniphenones and penilactones. The non-reducing PKS claF is responsible for the formation of clavatol from successive condensations of 3 malonyl-CoA units, presumably with a simple acetyl-CoA starter unit, and 2 methylation steps. The esterase claE probably collaborates with claF by catalyzing the hydrolysis of ACP-bound acyl intermediates to free the ACP from stalled intermediates. The clavatol oxidase claD then converts clavatol to hydroxyclavatol. Spontaneous dehydration of hydroxyclavatol leads to the accumulation of the highly active ortho-quinone methide. On the other hand, the PKS-NRPS hybrid traA is involved in the formation of crustosic acid, with the help of traB and traD. The polyketide synthase module (PKS) of traA is responsible for the synthesis of the polyketide backbone via the condensation of an acetyl-CoA starter unit with 3 malonyl-CoA units. The downstream nonribosomal peptide synthetase (NRPS) module then amidates the carboxyl end of the polyketide with L-malic acid. Because traA lacks a designated enoylreductase (ER) domain, the required activity is provided the enoyl reductase traG. Crustosic acid undergoes decarboxylation and isomerization to the terrestric acid, catalyzed by the 2-oxoglutarate-dependent dioxygenase traH. Both acids are further converted to the 2 gamma-butyrolactones (R)-5-methyltetronic acid and (S)-5-carboxylmethyltetronic acid, with involvement of the cytochrome P450 monooxygenase claJ. Spontaneous addition of the methide to these gamma-butyrolactones leads to peniphenone D and penilactone D, which undergo again stereospecific attacking by methide to give penilactones A and B. The polypeptide is Trans-enoyl reductase traG (Penicillium crustosum (Blue mold fungus)).